Reading from the N-terminus, the 527-residue chain is Glucose-6-phosphate isomerase (527 aa).

Catalysis depends on E323, which acts as the Proton donor. Active-site residues include H352 and K454.

This sequence belongs to the GPI family.

The protein localises to the cytoplasm. The enzyme catalyses alpha-D-glucose 6-phosphate = beta-D-fructose 6-phosphate. Its pathway is carbohydrate biosynthesis; gluconeogenesis. The protein operates within carbohydrate degradation; glycolysis; D-glyceraldehyde 3-phosphate and glycerone phosphate from D-glucose: step 2/4. Functionally, catalyzes the reversible isomerization of glucose-6-phosphate to fructose-6-phosphate. The protein is Glucose-6-phosphate isomerase of Prochlorococcus marinus (strain MIT 9515).